The sequence spans 385 residues: ATP phosphoribosyltransferase regulatory subunit (385 aa).

It belongs to the class-II aminoacyl-tRNA synthetase family. HisZ subfamily. In terms of assembly, heteromultimer composed of HisG and HisZ subunits.

The protein resides in the cytoplasm. The protein operates within amino-acid biosynthesis; L-histidine biosynthesis; L-histidine from 5-phospho-alpha-D-ribose 1-diphosphate: step 1/9. Its function is as follows. Required for the first step of histidine biosynthesis. May allow the feedback regulation of ATP phosphoribosyltransferase activity by histidine. The polypeptide is ATP phosphoribosyltransferase regulatory subunit (Lysinibacillus sphaericus (strain C3-41)).